The chain runs to 383 residues: Probable 2-succinylbenzoate--CoA ligase (383 aa).

This sequence belongs to the ATP-dependent AMP-binding enzyme family. MenE subfamily.

It carries out the reaction 2-succinylbenzoate + ATP + CoA = 2-succinylbenzoyl-CoA + AMP + diphosphate. The protein operates within quinol/quinone metabolism; 1,4-dihydroxy-2-naphthoate biosynthesis; 1,4-dihydroxy-2-naphthoate from chorismate: step 5/7. Its pathway is quinol/quinone metabolism; menaquinone biosynthesis. Functionally, converts 2-succinylbenzoate (OSB) to 2-succinylbenzoyl-CoA (OSB-CoA). May be involved in the biosynthesis of menaquinone. The protein is Probable 2-succinylbenzoate--CoA ligase (menE) of Mycobacterium tuberculosis (strain CDC 1551 / Oshkosh).